A 384-amino-acid polypeptide reads, in one-letter code: Zinc finger protein GLIS2 homolog (384 aa).

The C2H2-type 1 zinc finger occupies 128 to 153 (FVCNWTDCDRVFDTLDALAQHVTQRH). The C2H2-type 2; degenerate zinc finger occupies 163-190 (YYCRWRGCQRSERGFNARYKMLVHTRTH). 3 C2H2-type zinc fingers span residues 196–218 (HRCH…IRSH), 224–248 (YKCS…TRTH), and 254–280 (YMCK…TFKH). A disordered region spans residues 321-343 (SSSSARYYDDSNNEPSDYSLKPK).

Belongs to the GLI C2H2-type zinc-finger protein family.

Its subcellular location is the nucleus. Its function is as follows. Transcription factor which represses a set of lipase genes involved in fat catabolism. The sequence is that of Zinc finger protein GLIS2 homolog (sug) from Drosophila melanogaster (Fruit fly).